The primary structure comprises 374 residues: 5-aminosalicylate 1,2-dioxygenase (374 aa).

This sequence belongs to the gentisate 1,2-dioxygenase family. The cofactor is Fe(2+).

The enzyme catalyses 5-amino-2-hydroxybenzoate + O2 = (2Z,4E)-4-amino-6-oxohepta-2,4-dienedioate + H(+). Its activity is regulated as follows. Inhibited by SDS and o-phenanthroline, a ferrous iron chelator. Partially inhibited by EDTA. Its function is as follows. Involved in the biodegradation of 3-aminobenzoate. Catalyzes the cleavage of the 5-aminosalicylate (5ASA) aromatic ring to form 4-amino-6-oxohepta-2,4-dienedioate (cis-ACOHDA). Can also convert gentisate, but the catalytic efficiency with 5ASA is 70-fold higher. The sequence is that of 5-aminosalicylate 1,2-dioxygenase from Comamonas sp.